Consider the following 426-residue polypeptide: Amino acid transporter AVT1H (426 aa).

The next 11 membrane-spanning stretches (helical) occupy residues 34–54, 55–75, 110–130, 148–168, 182–202, 215–235, 248–268, 292–312, 340–360, 363–383, and 392–412; these read SFLH…QLSM, PYAV…FGIL, LIVC…YTIS, HFPA…SLWI, ILMS…GGVI, IPTV…FPNL, VSIV…ITGA, IALW…FAPL, LLLV…VLSL, SLVS…KICW, and AANL…SFES.

This sequence belongs to the amino acid/polyamine transporter 2 family. Amino acid/auxin permease (AAAP) (TC 2.A.18.5) subfamily.

Its subcellular location is the membrane. In Arabidopsis thaliana (Mouse-ear cress), this protein is Amino acid transporter AVT1H.